Consider the following 260-residue polypeptide: MFKNKDSVGGTLLVIILLSLACSIIVAGSAVLLKPTQIEQKELDKQKNILSVAGLLQPTTKNSEIKTIYANNIEARLVDLNTGDFAPAQPGFDAAKAVKNPAESTALSAEDDVAGIRVRANFAEVYLVKNDAGQVTQVVLPFYGKGLWSMMYGFMSVQPDGNTVNGITYYDQGETPGLGGEIENPKWQAQFPGKKLYTADNQVGLYVGKGASANAEHGIDAISGSTLTSNGVNNSFKFWLGQKGFGPFLAKLKAGVLNNG.

The chain crosses the membrane as a helical span at residues L12–L32. FMN phosphoryl threonine is present on T226.

Belongs to the NqrC family. In terms of assembly, composed of six subunits; NqrA, NqrB, NqrC, NqrD, NqrE and NqrF. Requires FMN as cofactor.

The protein resides in the cell inner membrane. The catalysed reaction is a ubiquinone + n Na(+)(in) + NADH + H(+) = a ubiquinol + n Na(+)(out) + NAD(+). Its function is as follows. NQR complex catalyzes the reduction of ubiquinone-1 to ubiquinol by two successive reactions, coupled with the transport of Na(+) ions from the cytoplasm to the periplasm. NqrA to NqrE are probably involved in the second step, the conversion of ubisemiquinone to ubiquinol. The protein is Na(+)-translocating NADH-quinone reductase subunit C of Pasteurella multocida (strain Pm70).